The following is a 195-amino-acid chain: MSVLVPMVVEQTSRGERAYDIYSRLLKDRVIFLVGQVEDHMANLAIAQMLFLESENPNKDINLYINSPGGAVTSAMAIYDTMQFVKPDVRTLCIGQAASAGALLLAGGAKGKRHCLPHSSVMIHQVLGGYQGQGTDIQIHAKQTQRVSDQLNQILAKHTGKDIERVEKDTNRDYFLTPEEAVEYGLIDSIFTERP.

The active-site Nucleophile is the Ser-99. His-124 is a catalytic residue.

This sequence belongs to the peptidase S14 family. As to quaternary structure, fourteen ClpP subunits assemble into 2 heptameric rings which stack back to back to give a disk-like structure with a central cavity, resembling the structure of eukaryotic proteasomes.

It is found in the cytoplasm. It carries out the reaction Hydrolysis of proteins to small peptides in the presence of ATP and magnesium. alpha-casein is the usual test substrate. In the absence of ATP, only oligopeptides shorter than five residues are hydrolyzed (such as succinyl-Leu-Tyr-|-NHMec, and Leu-Tyr-Leu-|-Tyr-Trp, in which cleavage of the -Tyr-|-Leu- and -Tyr-|-Trp bonds also occurs).. Functionally, cleaves peptides in various proteins in a process that requires ATP hydrolysis. Has a chymotrypsin-like activity. Plays a major role in the degradation of misfolded proteins. The chain is ATP-dependent Clp protease proteolytic subunit from Coxiella burnetii (strain CbuG_Q212) (Coxiella burnetii (strain Q212)).